Consider the following 1020-residue polypeptide: Sodium/potassium-transporting ATPase subunit alpha-2 (1020 aa).

The propeptide occupies 1 to 5 (MGRGA). Residues 1–31 (MGRGAGREYSPAATTAENGGGKKKQKEKELD) are disordered. The Cytoplasmic segment spans residues 6 to 85 (GREYSPAATT…NALTPPPTTP (80 aa)). Phosphoserine is present on Ser10. Residues 80–82 (PPP) are interaction with phosphoinositide-3 kinase. A helical transmembrane segment spans residues 86–106 (EWVKFCRQLFGGFSILLWIGA). At 107 to 129 (LLCFLAYGILAAMEDEPSNDNLY) the chain is on the extracellular side. The chain crosses the membrane as a helical span at residues 130–150 (LGIVLAAVVIVTGCFSYYQEA). Residues 151–286 (KSSKIMDSFK…VGQTPIAMEI (136 aa)) are Cytoplasmic-facing. Polar residues predominate over residues 212–227 (DNSSLTGESEPQTRSP). Residues 212–231 (DNSSLTGESEPQTRSPEFTH) form a disordered region. A helical transmembrane segment spans residues 287 to 306 (EHFIQLITGVAVFLGVSFFV). Over 307-318 (LSLILGYSWLEA) the chain is Extracellular. Residues 319–336 (VIFLIGIIVANVPEGLLA) traverse the membrane as a helical segment. The Cytoplasmic portion of the chain corresponds to 337–769 (TVTVCLTLTA…EEGRLIFDNL (433 aa)). Catalysis depends on Asp374, which acts as the 4-aspartylphosphate intermediate. Phosphoserine occurs at positions 439, 450, 496, and 559. The residue at position 570 (Thr570) is a Phosphothreonine. A phosphoserine mark is found at Ser587 and Ser672. Mg(2+) contacts are provided by Asp714 and Asp718. Residues 770 to 789 (KKSIAYTLTSNIPEITPFLL) traverse the membrane as a helical segment. Residues 790–799 (FIIANIPLPL) lie on the Extracellular side of the membrane. The helical transmembrane segment at 800 to 820 (GTVTILCIDLGTDMVPAISLA) threads the bilayer. Residues 821–840 (YEAAESDIMKRQPRNSQTDK) are Cytoplasmic-facing. The residue at position 826 (Ser826) is a Phosphoserine. A helical transmembrane segment spans residues 841–863 (LVNERLISMAYGQIGMIQALGGF). Residues 864–915 (FTYFVILAENGFLPSRLLGIRLDWDDRTTNDLEDSYGQEWTYEQRKVVEFTC) are Extracellular-facing. Residues 916 to 935 (HTAFFASIVVVQWADLIICK) form a helical membrane-spanning segment. Residues 936–948 (TRRNSVFQQGMKN) lie on the Cytoplasmic side of the membrane. Phosphoserine; by PKA is present on Ser940. Residues 949 to 967 (KILIFGLLEETALAAFLSY) traverse the membrane as a helical segment. Residues 968-982 (CPGMGVALRMYPLKV) are Extracellular-facing. Residues 983-1003 (TWWFCAFPYSLLIFIYDEVRK) traverse the membrane as a helical segment. The Cytoplasmic portion of the chain corresponds to 1004-1020 (LILRRYPGGWVEKETYY).

This sequence belongs to the cation transport ATPase (P-type) (TC 3.A.3) family. Type IIC subfamily. In terms of assembly, the sodium/potassium-transporting ATPase is composed of a catalytic alpha subunit, an auxiliary non-catalytic beta subunit and an additional regulatory subunit. Interacts with regulatory subunit FXYD1.

It localises to the membrane. The protein resides in the cell membrane. It catalyses the reaction K(+)(out) + Na(+)(in) + ATP + H2O = K(+)(in) + Na(+)(out) + ADP + phosphate + H(+). Functionally, this is the catalytic component of the active enzyme, which catalyzes the hydrolysis of ATP coupled with the exchange of sodium and potassium ions across the plasma membrane. This action creates the electrochemical gradient of sodium and potassium ions, providing the energy for active transport of various nutrients. This chain is Sodium/potassium-transporting ATPase subunit alpha-2 (Atp1a2), found in Mus musculus (Mouse).